An 845-amino-acid chain; its full sequence is Proto-oncogene vav (845 aa).

The 119-residue stretch at 1–119 (MELWRQCTHW…YTLSALSWTP (119 aa)) folds into the Calponin-homology (CH) domain. One can recognise a DH domain in the interval 194–373 (KRCCCLREIQ…RDLAQCVNEV (180 aa)). The region spanning 402 to 504 (RPKIDGELKI…WMEQFEMAIS (103 aa)) is the PH domain. The Phorbol-ester/DAG-type zinc finger occupies 515-564 (GHDFQMFSFEETTSCKACQMLLRGTFYQGYRCHRCRASAHKECLGRVPPC). The 69-residue stretch at 592 to 660 (LGLPKMEVFQ…PCNRVKPYVH (69 aa)) folds into the SH3 1 domain. One can recognise an SH2 domain in the interval 671 to 765 (WYAGPMERAG…SLDTTLQFPF (95 aa)). The SH3 2 domain occupies 782-842 (KYFGTAKARY…PANYVEEDYS (61 aa)). A phosphotyrosine mark is found at Y826 and Y844.

As to quaternary structure, interacts with SHB. Interacts with SH2B2, GRB2, GRB3, DOCK2, SLA, TEC and ZNF655/VIK. Interacts with SIAH2; without leading to its degradation. Associates with BLNK, PLCG1, GRB2 and NCK1 in a B-cell antigen receptor-dependent fashion. Interacts with CBLB; which inhibits tyrosine phosphorylation and down-regulates activity. May interact with CCPG1. Interacts with CLNK. Interacts with THEMIS2. Interacts with NEK3 and this interaction is prolactin-dependent. Interacts with ITK. Interacts with PTK2B/PYK2. Interacts with HCK. Interacts with PTK2B/PYK2. Interacts (via SH2 domain) with SYK. Interacts with ANKRD54. Interacts with CD6. Interacts with isoform 2 of CRACR2A. Interacts with LCP2; this interaction plays a role in TCR-mediated cytokine production. Phosphorylated on tyrosine residues by HCK in response to IFNG and bacterial lipopolysaccharide (LPS). Phosphorylated by FYN. In terms of tissue distribution, widely expressed in hematopoietic cells but not in other cell types.

Its function is as follows. Couples tyrosine kinase signals with the activation of the Rho/Rac GTPases, thus leading to cell differentiation and/or proliferation. The sequence is that of Proto-oncogene vav (VAV1) from Homo sapiens (Human).